A 92-amino-acid chain; its full sequence is Small ribosomal subunit protein uS19 (92 aa).

This sequence belongs to the universal ribosomal protein uS19 family.

In terms of biological role, protein S19 forms a complex with S13 that binds strongly to the 16S ribosomal RNA. This chain is Small ribosomal subunit protein uS19, found in Polaromonas sp. (strain JS666 / ATCC BAA-500).